The following is a 119-amino-acid chain: V-type proton ATPase subunit F (119 aa).

This sequence belongs to the V-ATPase F subunit family. In terms of assembly, V-ATPase is a heteromultimeric enzyme made up of two complexes: the ATP-hydrolytic V1 complex and the proton translocation V0 complex. The V1 complex consists of three catalytic AB heterodimers that form a heterohexamer, three peripheral stalks each consisting of EG heterodimers, one central rotor including subunits D and F, and the regulatory subunits C and H. The proton translocation complex V0 consists of the proton transport subunit a, a ring of proteolipid subunits c9c'', rotary subunit d, subunits e and f, and the accessory subunits ATP6AP1/Ac45 and ATP6AP2/PRR. As to expression, expressed in brain (at protein level).

Its subcellular location is the cytoplasmic vesicle. It is found in the secretory vesicle. It localises to the synaptic vesicle membrane. The protein resides in the clathrin-coated vesicle membrane. Functionally, subunit of the V1 complex of vacuolar(H+)-ATPase (V-ATPase), a multisubunit enzyme composed of a peripheral complex (V1) that hydrolyzes ATP and a membrane integral complex (V0) that translocates protons. V-ATPase is responsible for acidifying and maintaining the pH of intracellular compartments and in some cell types, is targeted to the plasma membrane, where it is responsible for acidifying the extracellular environment. This chain is V-type proton ATPase subunit F (ATP6V1F), found in Bos taurus (Bovine).